Consider the following 293-residue polypeptide: 4-hydroxy-tetrahydrodipicolinate synthase (293 aa).

Residue Thr-45 coordinates pyruvate. The active-site Proton donor/acceptor is Tyr-133. Lys-161 serves as the catalytic Schiff-base intermediate with substrate. Ile-203 contacts pyruvate.

Belongs to the DapA family. As to quaternary structure, homotetramer; dimer of dimers.

It is found in the cytoplasm. The catalysed reaction is L-aspartate 4-semialdehyde + pyruvate = (2S,4S)-4-hydroxy-2,3,4,5-tetrahydrodipicolinate + H2O + H(+). Its pathway is amino-acid biosynthesis; L-lysine biosynthesis via DAP pathway; (S)-tetrahydrodipicolinate from L-aspartate: step 3/4. In terms of biological role, catalyzes the condensation of (S)-aspartate-beta-semialdehyde [(S)-ASA] and pyruvate to 4-hydroxy-tetrahydrodipicolinate (HTPA). This Aliivibrio fischeri (strain MJ11) (Vibrio fischeri) protein is 4-hydroxy-tetrahydrodipicolinate synthase.